Reading from the N-terminus, the 875-residue chain is MDSRLALATEEPIKKDSLKRYKILCAVLLALLVIVSLGLGLGLGLRKPEEHIGSCRKKCFDSSHRGLEGCRCDSGCTDRGDCCWDFEDTCVKSTQIWTCNSFRCGETRLEAALCSCADDCLQRKDCCTDYKAVCQGEVPWVTEACASSQEPQCPEGFDQPPVILFSMDGFRAEYLQTWSTLLPNINKLKTCGLHSKYMRAMYPTKTFPNHYTIVTGLYPESHGIIDNNMYDVYLNKNFSLSSVEKSNPAWWSGQPIWLTAMYQGLKAASYYWPGSDVAVNGSFPNIYRNYSNSVPYESRIATLLQWLDLPKAERPSFYTIYVEEPDSAGHKSGPVSAGVIKALQLVDDAFGMLMEGLKQRNLHNCVNIIVLADHGMDQTSCDRVEYMTDYFPEINFYMYQGPAPRIRTRNIPQDFFTFNSEEIVRDLSCRKSDQHFKPYLTPDLPKRLHYAKNVRIDKVHLMVDRQWLAYRNKGSSNCEGGTHGYNNEFKSMEAIFLAHGPSFKEKTVIEPFENIEVYNLLCDLLHIQPAPNNGSHGSLNHLLKAPFYQPSHAEELSKSAGCGFTTPLPKDSLNCSCLALQTSGQEEQVNQRLNLSGGEVSATEKTNLPFGRPRVIQKNKDHCLLYHREYVSGFGKAMKMPMWSSYTVPKPGDTSSLPPTVPDCLRADVRVDPSESQKCSFYLADQNIDHGFLYPPAIKGNNESQYDALITSNLVPMYKEFKKMWDYFHKVLLIKYAIERNGVNVVSGPIFDYNYDGHFDAPDEITNYVAGTDVPVPTHYFVVLTSCKNKTHTPDSCPGWLDVLPFVVPHRPTNVESCPENKAEDLWVEERFKAHIARVRDVELLTGLDFYQEKTQPVSEILQLKTYLPTFETII.

Residues 1-11 (MDSRLALATEE) lie on the Cytoplasmic side of the membrane. Residues 12–30 (PIKKDSLKRYKILCAVLLA) traverse the membrane as a helical; Signal-anchor for type II membrane protein segment. The Extracellular portion of the chain corresponds to 31 to 875 (LLVIVSLGLG…TYLPTFETII (845 aa)). 2 consecutive SMB domains span residues 51–94 (HIGS…VKST) and 95–139 (QIWT…GEVP). 10 cysteine pairs are disulfide-bonded: cysteine 55-cysteine 72, cysteine 59-cysteine 90, cysteine 70-cysteine 83, cysteine 76-cysteine 82, cysteine 99-cysteine 116, cysteine 104-cysteine 134, cysteine 114-cysteine 127, cysteine 120-cysteine 126, cysteine 145-cysteine 191, and cysteine 153-cysteine 365. A Cell attachment site motif is present at residues 79–81 (RGD). The tract at residues 161–545 (PVILFSMDGF…HGSLNHLLKA (385 aa)) is phosphodiesterase. Residue aspartate 168 coordinates Zn(2+). An ATP-binding site is contributed by lysine 205. Position 206 (threonine 206) interacts with Zn(2+). Threonine 206 serves as the catalytic Nucleophile. Asparagine 227 contributes to the ATP binding site. An N-linked (GlcNAc...) asparagine glycan is attached at asparagine 237. Aspartate 276 lines the ATP pocket. N-linked (GlcNAc...) asparagine glycosylation is found at asparagine 280 and asparagine 289. Residue tyrosine 290 coordinates ATP. Zn(2+) contacts are provided by aspartate 326, histidine 330, aspartate 373, and histidine 374. 6 disulfide bridges follow: cysteine 381/cysteine 478, cysteine 429/cysteine 818, cysteine 562/cysteine 623, cysteine 575/cysteine 679, cysteine 577/cysteine 664, and cysteine 787/cysteine 797. Histidine 483 serves as a coordination point for Zn(2+). Asparagine 533, asparagine 574, asparagine 594, and asparagine 702 each carry an N-linked (GlcNAc...) asparagine glycan. The tract at residues 582–875 (TSGQEEQVNQ…TYLPTFETII (294 aa)) is nuclease. Ca(2+)-binding residues include aspartate 752, asparagine 754, aspartate 756, histidine 758, and aspartate 760. N-linked (GlcNAc...) asparagine glycosylation occurs at asparagine 789.

This sequence belongs to the nucleotide pyrophosphatase/phosphodiesterase family. In terms of assembly, monomer and homodimer. Requires Zn(2+) as cofactor. Post-translationally, the N-terminal is blocked. N-glycosylated. N-glycosylation is necessary for normal transport to the cell membrane, but is not the apical targeting signal. Detected in intestinal epithelium and liver (at protein level).

Its subcellular location is the cell membrane. It localises to the apical cell membrane. It is found in the secreted. It catalyses the reaction Hydrolytically removes 5'-nucleotides successively from the 3'-hydroxy termini of 3'-hydroxy-terminated oligonucleotides.. The enzyme catalyses a ribonucleoside 5'-triphosphate + H2O = a ribonucleoside 5'-phosphate + diphosphate + H(+). It carries out the reaction ATP + H2O = AMP + diphosphate + H(+). The catalysed reaction is CTP + H2O = CMP + diphosphate + H(+). It catalyses the reaction GTP + H2O = GMP + diphosphate + H(+). The enzyme catalyses UTP + H2O = UMP + diphosphate + H(+). It carries out the reaction UDP-N-acetyl-alpha-D-glucosamine + H2O = N-acetyl-alpha-D-glucosamine 1-phosphate + UMP + 2 H(+). The catalysed reaction is P(1),P(3)-bis(5'-adenosyl) triphosphate + H2O = AMP + ADP + 2 H(+). It catalyses the reaction P(1),P(4)-bis(5'-adenosyl) tetraphosphate + H2O = AMP + ATP + 2 H(+). The enzyme catalyses P(1),P(5)-bis(5'-adenosyl) pentaphosphate + H2O = adenosine 5'-tetraphosphate + AMP + 2 H(+). It carries out the reaction P(1),P(4)-bis(5'-guanosyl) tetraphosphate + H2O = GMP + GTP + 2 H(+). In terms of biological role, hydrolase that metabolizes extracellular nucleotides, including ATP, GTP, UTP and CTP. Limits mast cells and basophils response during inflammation and during the chronic phases of allergic responses by eliminating extracellular ATP, a signaling molecule activating these cells in an autocrine manner. Metabolizes extracellular ATP in the lumen of the small intestine, and thereby prevents ATP-induced apoptosis of intestinal plasmacytoid dendritic cells. Has a broad specificity and can also hydrolyze UDP-GlcNAc into UMP and GlcNAc-1-phosphate and potentially several other intracellular nucleotide sugars, including UDP-GalNAc, CMP-NeuAc, GDP-Fuc, and UDP-GlcA. Thereby, could modulate glycan biosynthesis and protein glycosylation. Can hydrolyze extracellular dinucleoside polyphosphates, including the vasoactive adenosine polyphosphates as well. In addition, displays an alkaline phosphodiesterase activity in vitro. The polypeptide is Ectonucleotide pyrophosphatase/phosphodiesterase family member 3 (Rattus norvegicus (Rat)).